We begin with the raw amino-acid sequence, 98 residues long: NADH-ubiquinone oxidoreductase chain 4L (98 aa).

3 consecutive transmembrane segments (helical) span residues 1 to 21 (MSLT…GLLM), 29 to 49 (ALLC…ITIL), and 61 to 81 (IILL…LVMV).

Belongs to the complex I subunit 4L family. Core subunit of respiratory chain NADH dehydrogenase (Complex I) which is composed of 45 different subunits.

The protein localises to the mitochondrion inner membrane. It carries out the reaction a ubiquinone + NADH + 5 H(+)(in) = a ubiquinol + NAD(+) + 4 H(+)(out). Functionally, core subunit of the mitochondrial membrane respiratory chain NADH dehydrogenase (Complex I) which catalyzes electron transfer from NADH through the respiratory chain, using ubiquinone as an electron acceptor. Part of the enzyme membrane arm which is embedded in the lipid bilayer and involved in proton translocation. The protein is NADH-ubiquinone oxidoreductase chain 4L (MT-ND4L) of Rhinophylla pumilio (Dwarf little fruit bat).